We begin with the raw amino-acid sequence, 250 residues long: NADH-quinone oxidoreductase subunit C (250 aa).

It belongs to the complex I 30 kDa subunit family. In terms of assembly, NDH-1 is composed of 14 different subunits. Subunits NuoB, C, D, E, F, and G constitute the peripheral sector of the complex.

It is found in the cell inner membrane. The catalysed reaction is a quinone + NADH + 5 H(+)(in) = a quinol + NAD(+) + 4 H(+)(out). Its function is as follows. NDH-1 shuttles electrons from NADH, via FMN and iron-sulfur (Fe-S) centers, to quinones in the respiratory chain. The immediate electron acceptor for the enzyme in this species is believed to be ubiquinone. Couples the redox reaction to proton translocation (for every two electrons transferred, four hydrogen ions are translocated across the cytoplasmic membrane), and thus conserves the redox energy in a proton gradient. The sequence is that of NADH-quinone oxidoreductase subunit C from Xylella fastidiosa (strain 9a5c).